Consider the following 1057-residue polypeptide: Carbamoyl phosphate synthase large chain (1057 aa).

Residues methionine 1–aspartate 401 form a carboxyphosphate synthetic domain region. 12 residues coordinate ATP: arginine 129, arginine 169, glycine 175, glycine 176, glutamine 208, isoleucine 210, glutamate 215, glycine 241, isoleucine 242, histidine 243, glutamine 284, and glutamate 298. Residues arginine 133–valine 327 enclose the ATP-grasp 1 domain. Positions 284, 298, and 300 each coordinate Mg(2+). Mn(2+) is bound by residues glutamine 284, glutamate 298, and asparagine 300. Positions isoleucine 402 to serine 546 are oligomerization domain. The tract at residues isoleucine 547 to lysine 929 is carbamoyl phosphate synthetic domain. The ATP-grasp 2 domain maps to asparagine 671 to leucine 861. Residues arginine 707, glutamine 746, leucine 748, glutamate 752, glycine 777, valine 778, histidine 779, serine 780, glutamine 820, and glutamate 832 each coordinate ATP. Mg(2+)-binding residues include glutamine 820, glutamate 832, and asparagine 834. Positions 820, 832, and 834 each coordinate Mn(2+). Positions methionine 930–leucine 1057 constitute an MGS-like domain. The interval methionine 930–leucine 1057 is allosteric domain.

The protein belongs to the CarB family. As to quaternary structure, composed of two chains; the small (or glutamine) chain promotes the hydrolysis of glutamine to ammonia, which is used by the large (or ammonia) chain to synthesize carbamoyl phosphate. Tetramer of heterodimers (alpha,beta)4. Mg(2+) is required as a cofactor. It depends on Mn(2+) as a cofactor.

It carries out the reaction hydrogencarbonate + L-glutamine + 2 ATP + H2O = carbamoyl phosphate + L-glutamate + 2 ADP + phosphate + 2 H(+). It catalyses the reaction hydrogencarbonate + NH4(+) + 2 ATP = carbamoyl phosphate + 2 ADP + phosphate + 2 H(+). The protein operates within amino-acid biosynthesis; L-arginine biosynthesis; carbamoyl phosphate from bicarbonate: step 1/1. It functions in the pathway pyrimidine metabolism; UMP biosynthesis via de novo pathway; (S)-dihydroorotate from bicarbonate: step 1/3. In terms of biological role, large subunit of the glutamine-dependent carbamoyl phosphate synthetase (CPSase). CPSase catalyzes the formation of carbamoyl phosphate from the ammonia moiety of glutamine, carbonate, and phosphate donated by ATP, constituting the first step of 2 biosynthetic pathways, one leading to arginine and/or urea and the other to pyrimidine nucleotides. The large subunit (synthetase) binds the substrates ammonia (free or transferred from glutamine from the small subunit), hydrogencarbonate and ATP and carries out an ATP-coupled ligase reaction, activating hydrogencarbonate by forming carboxy phosphate which reacts with ammonia to form carbamoyl phosphate. The polypeptide is Carbamoyl phosphate synthase large chain (Pediococcus pentosaceus (strain ATCC 25745 / CCUG 21536 / LMG 10740 / 183-1w)).